Here is a 619-residue protein sequence, read N- to C-terminus: MPKLRSATSTEGRNMAGARALWRATGVKDNDFGKPIIAIANSFTQFVPGHVHLKDMGSLVASAIEEAGGIAKEFNTIAVDDGIAMGHGGMLYSLPSRELIADSVEYMVNAHCADALVCISNCDKITPGMLMAALRLNIPVVFVSGGPMEAGKTKLSDKLIKLDLVDAMVAAADSSVSDEDSAKIERSACPTCGSCSGMFTANSMNCLTEALGLSLPGNGSMLATHSDRRELFLEAGRRVMALTKRYYEQDDTSALPRNIACFKAFENATALDIAMGGSSNTVLHLLAAAQEAEVAFTMDDIDRMSRLVPHLCKVAPSTPKYHMEDVHRAGGVMGILGELDRAGLLHTDVPHVAADAGGNLKSVLAKYDVMQTQDDNVKQFFMAGPAGIPTTKAFSQDCRWPSLDDDRREGCIRSREFAFSQEGGLAVLSGNLAENGCIVKTAGVDESNLIFVGSARVYESQDDAVAGILGGEVVAGDVVVIRYEGPKGGPGMQEMLYPTSYLKSRGLGKACALITDGRFSGGTSGLSIGHVSPEAAAGGTIALIENGDRIEIDIPARSIKLAVSDAELAGRRETMLARGPMAWKPVGRERFVSMALKAYAMLATSADKGAVRDRSKLED.

A Mg(2+)-binding site is contributed by Asp-81. Cys-122 is a binding site for [2Fe-2S] cluster. The Mg(2+) site is built by Asp-123 and Lys-124. Lys-124 is subject to N6-carboxylysine. Cys-195 lines the [2Fe-2S] cluster pocket. Glu-494 contributes to the Mg(2+) binding site. The Proton acceptor role is filled by Ser-520.

This sequence belongs to the IlvD/Edd family. Homodimer. Requires [2Fe-2S] cluster as cofactor. Mg(2+) is required as a cofactor.

The enzyme catalyses (2R)-2,3-dihydroxy-3-methylbutanoate = 3-methyl-2-oxobutanoate + H2O. It carries out the reaction (2R,3R)-2,3-dihydroxy-3-methylpentanoate = (S)-3-methyl-2-oxopentanoate + H2O. The protein operates within amino-acid biosynthesis; L-isoleucine biosynthesis; L-isoleucine from 2-oxobutanoate: step 3/4. Its pathway is amino-acid biosynthesis; L-valine biosynthesis; L-valine from pyruvate: step 3/4. Functions in the biosynthesis of branched-chain amino acids. Catalyzes the dehydration of (2R,3R)-2,3-dihydroxy-3-methylpentanoate (2,3-dihydroxy-3-methylvalerate) into 2-oxo-3-methylpentanoate (2-oxo-3-methylvalerate) and of (2R)-2,3-dihydroxy-3-methylbutanoate (2,3-dihydroxyisovalerate) into 2-oxo-3-methylbutanoate (2-oxoisovalerate), the penultimate precursor to L-isoleucine and L-valine, respectively. The protein is Dihydroxy-acid dehydratase of Shewanella oneidensis (strain ATCC 700550 / JCM 31522 / CIP 106686 / LMG 19005 / NCIMB 14063 / MR-1).